The following is a 359-amino-acid chain: UDP-3-O-acylglucosamine N-acyltransferase (359 aa).

The active-site Proton acceptor is the His253.

Belongs to the transferase hexapeptide repeat family. LpxD subfamily. As to quaternary structure, homotrimer.

The enzyme catalyses a UDP-3-O-[(3R)-3-hydroxyacyl]-alpha-D-glucosamine + a (3R)-hydroxyacyl-[ACP] = a UDP-2-N,3-O-bis[(3R)-3-hydroxyacyl]-alpha-D-glucosamine + holo-[ACP] + H(+). The protein operates within bacterial outer membrane biogenesis; LPS lipid A biosynthesis. In terms of biological role, catalyzes the N-acylation of UDP-3-O-acylglucosamine using 3-hydroxyacyl-ACP as the acyl donor. Is involved in the biosynthesis of lipid A, a phosphorylated glycolipid that anchors the lipopolysaccharide to the outer membrane of the cell. The polypeptide is UDP-3-O-acylglucosamine N-acyltransferase (Burkholderia cenocepacia (strain ATCC BAA-245 / DSM 16553 / LMG 16656 / NCTC 13227 / J2315 / CF5610) (Burkholderia cepacia (strain J2315))).